The sequence spans 164 residues: Cyclic pyranopterin monophosphate synthase (164 aa).

Substrate contacts are provided by residues 75–77 (MCH) and 116–117 (ME). Residue Asp131 is part of the active site.

Belongs to the MoaC family. In terms of assembly, homohexamer; trimer of dimers.

It catalyses the reaction (8S)-3',8-cyclo-7,8-dihydroguanosine 5'-triphosphate = cyclic pyranopterin phosphate + diphosphate. It functions in the pathway cofactor biosynthesis; molybdopterin biosynthesis. Its function is as follows. Catalyzes the conversion of (8S)-3',8-cyclo-7,8-dihydroguanosine 5'-triphosphate to cyclic pyranopterin monophosphate (cPMP). This chain is Cyclic pyranopterin monophosphate synthase, found in Staphylococcus aureus (strain bovine RF122 / ET3-1).